The chain runs to 189 residues: Orcokinin peptides (189 aa).

Residues 1–21 form the signal peptide; sequence MRGAGGALAVAVAALLVCCSA. 2 propeptides span residues 22 to 124 and 145 to 174; these read DPHQ…TFVK and FYHL…PIGS.

It belongs to the orcokinin family. As to expression, orcokinin-like peptide: Expressed in corpora cardiaca (CC), corpora allata (CA), antennal lobe (AL) and gnathal ganglion (GNG) (at protein level). Expression in CC, CA and GNG detected in some animals, in AL in few animals (at protein level). Orcokinin-like peptide precursor-related peptide: Expressed in corpora cardiaca (CC), corpora allata (CA), antennal lobe (AL) and gnathal ganglion (GNG) (at protein level). Expression in GNG detected in most animals, expression in CC, CA and AL detected in some animals (at protein level).

It localises to the secreted. Myotropic peptides. The polypeptide is Orcokinin peptides (Agrotis ipsilon (Black cutworm moth)).